A 275-amino-acid chain; its full sequence is Large ribosomal subunit protein uL2c (275 aa).

Disordered regions lie at residues 36–56 and 224–275; these read KNHR…HRGK and VMNP…RKRK. Over residues 255 to 275 the composition is skewed to basic residues; the sequence is LGRKTRKKPKYSNRYILRKRK.

This sequence belongs to the universal ribosomal protein uL2 family. As to quaternary structure, part of the 50S ribosomal subunit.

It localises to the plastid. It is found in the chloroplast. This chain is Large ribosomal subunit protein uL2c (rpl2), found in Gracilaria tenuistipitata var. liui (Red alga).